The following is a 151-amino-acid chain: Transcriptional repressor NrdR (151 aa).

The segment at 3–34 (CPHCGNCDDKVMESRTLAQGDCIRRRRECLAC) is a zinc-finger region. Positions 49 to 141 (FMVIKKDGRR…VYKQFSNLDE (93 aa)) constitute an ATP-cone domain.

This sequence belongs to the NrdR family. Zn(2+) serves as cofactor.

Functionally, negatively regulates transcription of bacterial ribonucleotide reductase nrd genes and operons by binding to NrdR-boxes. The chain is Transcriptional repressor NrdR from Treponema denticola (strain ATCC 35405 / DSM 14222 / CIP 103919 / JCM 8153 / KCTC 15104).